We begin with the raw amino-acid sequence, 2242 residues long: DEP domain-containing protein DDB_G0279099 (2242 aa).

9 disordered regions span residues 388-465 (SQNT…SNNS), 576-644 (DSNA…YSRV), 701-730 (PILRNGGTINNNNNNQQNHPISPSNSFDQK), 871-965 (DPTT…TKKS), 1077-1194 (QLQL…AFNS), 1287-1336 (GSQQ…MNGS), 1384-1414 (SELLPSSSGASSSSSNTLSSSNSGENNALPE), 1446-1471 (AQSSLLNSSTNNANSNNSSNSTNTSG), and 1502-1521 (SNNNTYTNNNNNNNSINSLN). Residues 392 to 440 (IQNNNNNNNNNNNNNNNNNNNNNNNNNNNNNNNNNNNNNSNNNKNNQNN) are a coiled coil. Positions 581–614 (GGNNNNNYNNNNGNGNGHNHNNHNNNNNNNNNND) are enriched in low complexity. Over residues 622 to 631 (EPSDFSDTED) the composition is skewed to acidic residues. Composition is skewed to polar residues over residues 632 to 642 (NSSTTPNSQYS) and 719 to 729 (HPISPSNSFDQ). Positions 872–955 (PTTTTTTGGT…PNSSNTVPNS (84 aa)) are enriched in low complexity. The stretch at 1066–1101 (IPTVENNQHQQQLQLEQQEKEKEKARLAALEKKKPF) forms a coiled coil. Residues 1082–1106 (QQEKEKEKARLAALEKKKPFPREDS) show a composition bias toward basic and acidic residues. Composition is skewed to low complexity over residues 1108-1182 (STLI…ATTA) and 1287-1299 (GSQQQQQLIGSQS). Polar residues predominate over residues 1300-1311 (APTSPLTPHKNI). Low complexity-rich tracts occupy residues 1312–1336 (NTNNNNNNNTTTNTTNNNNSVMNGS), 1384–1410 (SELLPSSSGASSSSSNTLSSSNSGENN), and 1446–1470 (AQSSLLNSSTNNANSNNSSNSTNTS). Residues 1556–1629 (IGIKMTERKY…DGQFYYRLKE (74 aa)) form the DEP domain. The segment covering 1645–1668 (TNNNFNNNNTNSNNNQQQQQQQQS) has biased composition (low complexity). Disordered regions lie at residues 1645 to 1763 (TNNN…SMSN), 1803 to 1910 (DEAN…QQQQ), 2122 to 2145 (NYNNNNNNNNNNNGGGNGNPNLLK), and 2165 to 2218 (NSDT…KNEM). The span at 1669 to 1702 (IPSVTSSAVNSPNKDSNTPDHSPISSPKQIGNKL) shows a compositional bias: polar residues. Composition is skewed to low complexity over residues 1703–1760 (SSSS…IQSS) and 1807–1848 (GDNN…SSNS). Residues 1791 to 1821 (LTNKEKDKEKEIDEANGDNNNNNNNNNNNNN) are a coiled coil. Polar residues-rich tracts occupy residues 1849-1871 (GQGSLNSTLSSIPPATTPNTNPL) and 1879-1889 (YGSSVQNSNQH). 2 stretches are compositionally biased toward low complexity: residues 1890 to 1910 (QQQQPQQPQQQQQQQQQQQQQ) and 2122 to 2133 (NYNNNNNNNNNN). 2 stretches are compositionally biased toward basic and acidic residues: residues 2166-2181 (SDTEEKNNESDSDNNH) and 2192-2218 (DTDHLSESHEGSHKNESDKEGRDKNEM).

The protein in the N-terminal section; belongs to the IML1 family.

In Dictyostelium discoideum (Social amoeba), this protein is DEP domain-containing protein DDB_G0279099.